Here is a 379-residue protein sequence, read N- to C-terminus: Alanine racemase (379 aa).

Catalysis depends on Lys35, which acts as the Proton acceptor; specific for D-alanine. Lys35 carries the N6-(pyridoxal phosphate)lysine modification. Substrate is bound at residue Arg133. Tyr265 functions as the Proton acceptor; specific for L-alanine in the catalytic mechanism. Met312 lines the substrate pocket.

It belongs to the alanine racemase family. Requires pyridoxal 5'-phosphate as cofactor.

The enzyme catalyses L-alanine = D-alanine. Its pathway is amino-acid biosynthesis; D-alanine biosynthesis; D-alanine from L-alanine: step 1/1. Its function is as follows. Catalyzes the interconversion of L-alanine and D-alanine. May also act on other amino acids. The protein is Alanine racemase (alr) of Treponema denticola (strain ATCC 35405 / DSM 14222 / CIP 103919 / JCM 8153 / KCTC 15104).